The primary structure comprises 1368 residues: Inactive tyrosine-protein kinase PRAG1 (1368 aa).

Positions 200 to 236 (CLKGPRPCTSPQPLRESLPSEDDSDQRCSPSGDSEGG) are disordered. Tyrosine 238 carries the phosphotyrosine; by CSK modification. The segment at 297-330 (STANPPHLGPKKPSLNSEAASSSDGLSCGSSRSG) is disordered. Residues 317 to 330 (SSSDGLSCGSSRSG) are compositionally biased toward low complexity. Tyrosine 343 and tyrosine 391 each carry phosphotyrosine; by CSK. Disordered stretches follow at residues 392 to 443 (AESA…PNAA), 499 to 605 (LSSR…GAWS), and 636 to 792 (HSNS…KKIV). Polar residues predominate over residues 414–434 (VSSGQVWTGDTWSQKTPSGWS). Basic and acidic residues predominate over residues 502–518 (RESHPHNMTENSSKEKP). Composition is skewed to low complexity over residues 522–535 (PKLSKSSPGGSPVS) and 550–563 (SGSSVGSQPSSRVP). Polar residues-rich tracts occupy residues 564–574 (TNLTSSCQTNG) and 652–666 (SGQNGKTNSGMSKSA). Serine 667 and serine 716 each carry phosphoserine. Polar residues-rich tracts occupy residues 707–717 (VSQSSAESLSP) and 725–741 (SFTTGSTDSLASDSRTC). 2 positions are modified to phosphoserine: serine 753 and serine 797. Disordered stretches follow at residues 799-818 (PDGFFWTQGSPKPRTASPKL) and 873-901 (NSKGGCGSPNLQGRAATSTSSSQLSVSSQ). The span at 887 to 901 (AATSTSSSQLSVSSQ) shows a compositional bias: low complexity. Residues 906–949 (SSQLQLHSLLSSISSKEGTYAKLGGLYTQSLARLVTKCEDLFMG) are required for homodimerization. Positions 940-1291 (VTKCEDLFMG…EAKRVLQCLL (352 aa)) constitute a Protein kinase domain. The segment covering 1134–1144 (SSPGPSANPSV) has biased composition (polar residues). The disordered stretch occupies residues 1134–1166 (SSPGPSANPSVPTTTSRCPSAAPAATTACQGGP). A compositionally biased stretch (low complexity) spans 1145 to 1162 (PTTTSRCPSAAPAATTAC). The segment at 1293–1368 (GPRRELVEQP…LQSLKLLQLL (76 aa)) is required for homodimerization.

The protein belongs to the protein kinase superfamily. As to quaternary structure, homodimer. Dimerization leads to the catalytic activation of CSK. Interacts (via C-terminus) with RND2. Interacts with CSK (via SH2 domain) in a Tyr-391 phosphorylation-dependent manner; this interaction potentiates kinase activity of CSK. Interacts with NOTCH1 intracellular domain (N1ICD). Forms a complex with N1ICD and MAML1, in a MAML1-dependent manner. Phosphorylated by CSK on Tyr-238, Tyr-343, and Tyr-391; Tyr-391 is a primary site of phosphorylation. As to expression, highly-expressed in brain, including cortical and hippocampal pyramidal neurons, as well as in kidney, spleen, colon and small intestine.

The protein localises to the cytoplasm. The protein resides in the nucleus. Its subcellular location is the cell junction. It is found in the focal adhesion. In terms of biological role, catalytically inactive protein kinase that acts as a scaffold protein. Functions as an effector of the small GTPase RND2, which stimulates RhoA activity and inhibits NGF-induced neurite outgrowth. Promotes Src family kinase (SFK) signallig by regulating the subcellular localization of CSK, a negative regulator of these kinases, leading to the regulation of cell morphology and motility by a CSK-dependent mechanism. Acts as a critical coactivator of Notch signaling. This is Inactive tyrosine-protein kinase PRAG1 from Rattus norvegicus (Rat).